Reading from the N-terminus, the 512-residue chain is Circadian clock oscillator protein KaiC (512 aa).

KaiC domains are found at residues 1 to 243 and 257 to 512; these read MQFP…ISIF and VRVS…SSED. Residues Gly45, Thr46, Gly47, Lys48, Thr49, Ser85, Lys220, Leu221, Arg222, Thr224, His226, Thr286, Gly287, Thr288, Gly289, Lys290, Thr291, and Leu292 each contribute to the ATP site. Position 49 (Thr49) interacts with Mg(2+). Residue Thr291 participates in Mg(2+) binding. Position 314 (Glu314) interacts with Mg(2+). Trp327 is a binding site for ATP. Position 427 is a phosphoserine; by autocatalysis (Ser427). The residue at position 428 (Thr428) is a Phosphothreonine; by autocatalysis. Residues Arg447, Lys453, Met454, Arg455, Ser457, His459, and Lys461 each contribute to the ATP site.

This sequence belongs to the KaiC family. In terms of assembly, homohexamer; hexamerization is dependent on ATP-binding. The KaiABC complex composition changes during the circadian cycle to control KaiC phosphorylation. Complexes KaiC(6), KaiA(2-4):KaiC(6), KaiB(6):KaiC(6) and KaiC(6):KaiB(6):KaiA(12) are among the most important forms, many form cooperatively. KaiC interacts with SasA, activating its autokinase function and leading to RpaA activation. The cofactor is Mg(2+). In terms of processing, phosphorylated on serine and threonine residues by autocatalysis. Has a 4 step phosphorylation cycle; the autokinase acts first on Thr-428, then Ser-427. When Ser-427 is modified KaiC switches to an autophosphatase mode, acting first on phospho-Thr-428 then phospho-Ser-427.

The enzyme catalyses L-seryl-[protein] + ATP = O-phospho-L-seryl-[protein] + ADP + H(+). It catalyses the reaction L-threonyl-[protein] + ATP = O-phospho-L-threonyl-[protein] + ADP + H(+). It carries out the reaction ATP + H2O = ADP + phosphate + H(+). With respect to regulation, the interaction with KaiA enhances its phosphorylation status, while the interaction with KaiB decreases it. Its function is as follows. Central component of the KaiABC oscillator complex, which constitutes the main circadian regulator in cyanobacteria. Complex composition changes during the circadian cycle to control KaiC phosphorylation. KaiA stimulates KaiC autophosphorylation, while KaiB sequesters KaiA, leading to KaiC autodephosphorylation. Clock output pathways impact the RpaA transcriptional regulator. KaiC enhances the autophosphorylation activity of SasA, which then transfers its phosphate group to RpaA to activate it. KaiB and KaiC together enhance the phospho-RpaA dephosphatase activity of CikA. Functionally, has a weak, temperature-independent ATPase activity; ATPase activity defines the circadian period. The phosphorylation state of KaiC modulates its ATPase activity and effects KaiB binding. In Parasynechococcus marenigrum (strain WH8102), this protein is Circadian clock oscillator protein KaiC.